We begin with the raw amino-acid sequence, 529 residues long: Calcium-dependent protein kinase 3 (529 aa).

The disordered stretch occupies residues 1–73 (MGHRHSKSKS…GRILGRPMEE (73 aa)). A lipid anchor (N-myristoyl glycine) is attached at glycine 2. Over residues 39–53 (SGSGTVGSSGSGTGG) the composition is skewed to gly residues. Residues 78–336 (YEFGRELGRG…AAEVLNHPWI (259 aa)) enclose the Protein kinase domain. Residues 84–92 (LGRGQFGVT) and lysine 107 contribute to the ATP site. Catalysis depends on aspartate 202, which acts as the Proton acceptor. A Phosphoserine modification is found at serine 242. Positions 342 to 372 (ASDKPLDNAVLSRMKQFRAMNKLKKMALKVI) are autoinhibitory domain. EF-hand domains lie at 379-414 (EEIIGLKEMFKSLDTDNNGIVTLEELRTGLPKLGSK), 415-450 (ISEAEIRQLMEAADMDGDGSIDYLEFISATMHMNRI), 451-485 (EREDHLYTAFQFFDNDNSGYITMEELELAMKKYNM), and 486-521 (GDDKSIKEIIAEVDTDRDGKINYEEFVAMMKKGNPE). The Ca(2+) site is built by aspartate 392, aspartate 394, asparagine 396, glutamate 403, aspartate 428, aspartate 430, aspartate 432, serine 434, glutamate 439, aspartate 464, aspartate 466, serine 468, tyrosine 470, glutamate 475, aspartate 499, aspartate 501, aspartate 503, lysine 505, and glutamate 510.

Belongs to the protein kinase superfamily. Ser/Thr protein kinase family. CDPK subfamily. As to quaternary structure, interacts with GHR1. Expressed in both guard cells and mesophyll cells.

It localises to the cytoplasm. It is found in the nucleus. It catalyses the reaction L-seryl-[protein] + ATP = O-phospho-L-seryl-[protein] + ADP + H(+). The catalysed reaction is L-threonyl-[protein] + ATP = O-phospho-L-threonyl-[protein] + ADP + H(+). With respect to regulation, activated by calcium. Autophosphorylation may play an important role in the regulation of the kinase activity. Its function is as follows. May play a role in signal transduction pathways that involve calcium as a second messenger. Functions in abscisic acid (ABA) regulation of guard cell S-type anion- and Ca(2+)-permeable channels and stomatal closure. In Arabidopsis thaliana (Mouse-ear cress), this protein is Calcium-dependent protein kinase 3.